A 493-amino-acid polypeptide reads, in one-letter code: N-acetylglucosamine kinase 1 (493 aa).

A Hexokinase domain is found at 27–490; that stretch reads ESSVLSSIVE…SIIGAAIGAA (464 aa). The hexokinase small subdomain stretch occupies residues 79-221; sequence TGDEHGQYLV…GLTLDVQSIL (143 aa). A hexokinase large subdomain region spans residues 222–479; that stretch reads NDSLAVYSAG…IKVDLKLIEN (258 aa).

Belongs to the hexokinase family. As to quaternary structure, interacts with histone deacetylase SIR2 under filamentation-inducing conditions.

The protein resides in the cytoplasm. The protein localises to the nucleus. It is found in the mitochondrion. It catalyses the reaction N-acetyl-D-glucosamine + ATP = N-acetyl-D-glucosamine 6-phosphate + ADP + H(+). The enzyme catalyses D-mannose + ATP = D-mannose 6-phosphate + ADP + H(+). It carries out the reaction D-glucose + ATP = D-glucose 6-phosphate + ADP + H(+). The catalysed reaction is D-glucosamine + ATP = D-glucosamine 6-phosphate + ADP + H(+). It participates in carbohydrate metabolism; hexose metabolism. Its pathway is carbohydrate degradation; glycolysis; D-glyceraldehyde 3-phosphate and glycerone phosphate from D-glucose: step 1/4. Component of the N-acetylglucosamine catabolic cascade that phosphorylates N-acetylglucosamine (GlcNAc), and allows the unique ability to utilise GlcNAc as carbon source. Converts GlcNAc to GlcNAc-6-P. Also able to phosphorylate glucose, glucosamine (GlcN), and mannose. Galactose, fructose, N-acetylmannosamine (ManNAc), mannosamine (ManN), galactosamine (GalN), and N-acetylgalactosamine (GalNAc) are not phosphorylated by HXK1. GlcNAc metabolism is closely associated with virulence and morphogenesis, and is involved in the cell wall synthesis. Acts both as a repressor and an activator of genes involved in maintaining cellular homeostasis. Contributes to white-opaque morphological transition and plays a role as a filamentation repressor. This is N-acetylglucosamine kinase 1 from Candida albicans (strain SC5314 / ATCC MYA-2876) (Yeast).